The primary structure comprises 89 residues: Small ribosomal subunit protein uS15 (89 aa).

It belongs to the universal ribosomal protein uS15 family. As to quaternary structure, part of the 30S ribosomal subunit. Forms a bridge to the 50S subunit in the 70S ribosome, contacting the 23S rRNA.

Its function is as follows. One of the primary rRNA binding proteins, it binds directly to 16S rRNA where it helps nucleate assembly of the platform of the 30S subunit by binding and bridging several RNA helices of the 16S rRNA. In terms of biological role, forms an intersubunit bridge (bridge B4) with the 23S rRNA of the 50S subunit in the ribosome. In Limosilactobacillus reuteri (strain DSM 20016) (Lactobacillus reuteri), this protein is Small ribosomal subunit protein uS15.